The chain runs to 274 residues: 2,3,4,5-tetrahydropyridine-2,6-dicarboxylate N-succinyltransferase (274 aa).

Arginine 104 and aspartate 141 together coordinate substrate.

It belongs to the transferase hexapeptide repeat family. As to quaternary structure, homotrimer.

It localises to the cytoplasm. The enzyme catalyses (S)-2,3,4,5-tetrahydrodipicolinate + succinyl-CoA + H2O = (S)-2-succinylamino-6-oxoheptanedioate + CoA. It functions in the pathway amino-acid biosynthesis; L-lysine biosynthesis via DAP pathway; LL-2,6-diaminopimelate from (S)-tetrahydrodipicolinate (succinylase route): step 1/3. This is 2,3,4,5-tetrahydropyridine-2,6-dicarboxylate N-succinyltransferase from Photorhabdus laumondii subsp. laumondii (strain DSM 15139 / CIP 105565 / TT01) (Photorhabdus luminescens subsp. laumondii).